The sequence spans 599 residues: Elongation factor 4 (599 aa).

The tr-type G domain maps to 5–187; the sequence is AHIRNFSIVA…AIVKHLPAPK (183 aa). GTP is bound by residues 17-22 and 134-137; these read DHGKST and NKID.

This sequence belongs to the TRAFAC class translation factor GTPase superfamily. Classic translation factor GTPase family. LepA subfamily.

It localises to the cell inner membrane. It carries out the reaction GTP + H2O = GDP + phosphate + H(+). Functionally, required for accurate and efficient protein synthesis under certain stress conditions. May act as a fidelity factor of the translation reaction, by catalyzing a one-codon backward translocation of tRNAs on improperly translocated ribosomes. Back-translocation proceeds from a post-translocation (POST) complex to a pre-translocation (PRE) complex, thus giving elongation factor G a second chance to translocate the tRNAs correctly. Binds to ribosomes in a GTP-dependent manner. This chain is Elongation factor 4, found in Ruegeria pomeroyi (strain ATCC 700808 / DSM 15171 / DSS-3) (Silicibacter pomeroyi).